A 108-amino-acid polypeptide reads, in one-letter code: Replication restart protein PriB (108 aa).

An SSB domain is found at 8-108 (VDNRFSLIGK…LHAEQIEFIE (101 aa)).

The protein belongs to the PriB family. As to quaternary structure, homodimer. Interacts with PriA and DnaT. Component of the replication restart primosome. Primosome assembly occurs via a 'hand-off' mechanism. PriA binds to replication forks, subsequently PriB then DnaT bind; DnaT then displaces ssDNA to generate the helicase loading substrate.

Functionally, involved in the restart of stalled replication forks, which reloads the replicative helicase on sites other than the origin of replication; the PriA-PriB pathway is the major replication restart pathway. During primosome assembly it facilitates complex formation between PriA and DnaT on DNA; stabilizes PriA on DNA. Stimulates the DNA unwinding activity of PriA helicase. The chain is Replication restart protein PriB from Histophilus somni (strain 2336) (Haemophilus somnus).